We begin with the raw amino-acid sequence, 718 residues long: Threonine--tRNA ligase, mitochondrial (718 aa).

Serine 52 is subject to Phosphoserine. Residues 55–121 enclose the TGS domain; it reads QKEPRTIKIS…ETDSDLRFLT (67 aa).

It belongs to the class-II aminoacyl-tRNA synthetase family. As to quaternary structure, homodimer.

It is found in the mitochondrion matrix. The catalysed reaction is tRNA(Thr) + L-threonine + ATP = L-threonyl-tRNA(Thr) + AMP + diphosphate + H(+). Catalyzes the attachment of threonine to tRNA(Thr) in a two-step reaction: threonine is first activated by ATP to form Thr-AMP and then transferred to the acceptor end of tRNA(Thr). Also edits incorrectly charged tRNA(Thr) via its editing domain. This Homo sapiens (Human) protein is Threonine--tRNA ligase, mitochondrial (TARS2).